Consider the following 287-residue polypeptide: Elongation factor Ts (287 aa).

Residues 80-83 (TDFL) are involved in Mg(2+) ion dislocation from EF-Tu.

Belongs to the EF-Ts family.

Its subcellular location is the cytoplasm. In terms of biological role, associates with the EF-Tu.GDP complex and induces the exchange of GDP to GTP. It remains bound to the aminoacyl-tRNA.EF-Tu.GTP complex up to the GTP hydrolysis stage on the ribosome. The chain is Elongation factor Ts from Pseudomonas syringae pv. syringae (strain B728a).